The sequence spans 227 residues: Cytochrome c oxidase subunit 2 (227 aa).

Topologically, residues 1–14 (MAHPMQLGFQDAAS) are mitochondrial intermembrane. The chain crosses the membrane as a helical span at residues 15–45 (PIMEELLYFHDHTLMIVFMISSLVLYIISLM). Residues 46-59 (LSTELTHTSTMDAQ) are Mitochondrial matrix-facing. The helical transmembrane segment at 60 to 87 (EVETVWTILPAVILILIALPSLRILYMM) threads the bilayer. At 88–227 (DEINTPSMTL…YFEEWLLKSL (140 aa)) the chain is on the mitochondrial intermembrane side. Cu cation contacts are provided by His161, Cys196, Glu198, Cys200, His204, and Met207. Position 198 (Glu198) interacts with Mg(2+). Phosphotyrosine is present on Tyr218.

Belongs to the cytochrome c oxidase subunit 2 family. As to quaternary structure, component of the cytochrome c oxidase (complex IV, CIV), a multisubunit enzyme composed of 14 subunits. The complex is composed of a catalytic core of 3 subunits MT-CO1, MT-CO2 and MT-CO3, encoded in the mitochondrial DNA, and 11 supernumerary subunits COX4I, COX5A, COX5B, COX6A, COX6B, COX6C, COX7A, COX7B, COX7C, COX8 and NDUFA4, which are encoded in the nuclear genome. The complex exists as a monomer or a dimer and forms supercomplexes (SCs) in the inner mitochondrial membrane with NADH-ubiquinone oxidoreductase (complex I, CI) and ubiquinol-cytochrome c oxidoreductase (cytochrome b-c1 complex, complex III, CIII), resulting in different assemblies (supercomplex SCI(1)III(2)IV(1) and megacomplex MCI(2)III(2)IV(2)). Found in a complex with TMEM177, COA6, COX18, COX20, SCO1 and SCO2. Interacts with TMEM177 in a COX20-dependent manner. Interacts with COX20. Interacts with COX16. Cu cation is required as a cofactor.

Its subcellular location is the mitochondrion inner membrane. It catalyses the reaction 4 Fe(II)-[cytochrome c] + O2 + 8 H(+)(in) = 4 Fe(III)-[cytochrome c] + 2 H2O + 4 H(+)(out). In terms of biological role, component of the cytochrome c oxidase, the last enzyme in the mitochondrial electron transport chain which drives oxidative phosphorylation. The respiratory chain contains 3 multisubunit complexes succinate dehydrogenase (complex II, CII), ubiquinol-cytochrome c oxidoreductase (cytochrome b-c1 complex, complex III, CIII) and cytochrome c oxidase (complex IV, CIV), that cooperate to transfer electrons derived from NADH and succinate to molecular oxygen, creating an electrochemical gradient over the inner membrane that drives transmembrane transport and the ATP synthase. Cytochrome c oxidase is the component of the respiratory chain that catalyzes the reduction of oxygen to water. Electrons originating from reduced cytochrome c in the intermembrane space (IMS) are transferred via the dinuclear copper A center (CU(A)) of subunit 2 and heme A of subunit 1 to the active site in subunit 1, a binuclear center (BNC) formed by heme A3 and copper B (CU(B)). The BNC reduces molecular oxygen to 2 water molecules using 4 electrons from cytochrome c in the IMS and 4 protons from the mitochondrial matrix. The protein is Cytochrome c oxidase subunit 2 (MT-CO2) of Nycticebus coucang (Slow loris).